The sequence spans 174 residues: Probable calcium-binding protein CML20 (174 aa).

A lipid anchor (N-myristoyl glycine) is attached at Gly2. The disordered stretch occupies residues Leu14–Ser35. 4 consecutive EF-hand domains span residues Glu39 to Glu74, Ala75 to Glu100, Gly102 to Asp137, and Leu141 to Ala174. Asp52, Asp54, Asp56, Glu63, Asp83, Asp85, Asp87, Glu94, Asp115, Asp117, Asn119, Glu126, Asp154, Asp156, Asp158, and Glu165 together coordinate Ca(2+).

Potential calcium sensor. This is Probable calcium-binding protein CML20 (CML20) from Oryza sativa subsp. japonica (Rice).